A 156-amino-acid chain; its full sequence is Ribosomal RNA large subunit methyltransferase H (156 aa).

S-adenosyl-L-methionine-binding positions include glycine 104 and 123-128; that span reads LSALTL.

This sequence belongs to the RNA methyltransferase RlmH family. Homodimer.

The protein resides in the cytoplasm. The enzyme catalyses pseudouridine(1915) in 23S rRNA + S-adenosyl-L-methionine = N(3)-methylpseudouridine(1915) in 23S rRNA + S-adenosyl-L-homocysteine + H(+). Its function is as follows. Specifically methylates the pseudouridine at position 1915 (m3Psi1915) in 23S rRNA. This is Ribosomal RNA large subunit methyltransferase H from Nitrosospira multiformis (strain ATCC 25196 / NCIMB 11849 / C 71).